Reading from the N-terminus, the 263-residue chain is Meiotic drive suppressor wtf6 (263 aa).

Positions 1 to 68 are disordered; the sequence is MKNNYTSLKS…REKNPSRSTD (68 aa). Residues 19-30 are compositionally biased toward basic and acidic residues; that stretch reads KTDHEIDLEKGP. 3 helical membrane passes run 73-93, 110-130, and 201-221; these read FLIK…PAVC, WTLF…LTYF, and SASA…AETV.

This sequence belongs to the WTF family. Homomer. Interacts with other proteins that exhibit high sequence similarity.

Its subcellular location is the spore membrane. It is found in the vacuole membrane. Functionally, acts as a suppressor component of the dual wtf meiotic drive system, and can suppress but not confer meiotic drive by compatible poisons. Wtf meiotic drive systems promote unequal transmission of alleles from the parental zygote to progeny spores by encoding a poison and an antidote from the same locus; the poison is trans-acting and forms toxic aggregates in all spores within an ascus, wherease the antidote is spore-specific and targets aggregates for degradation by the vacuole. Meiotic drive by wtf systems therefore lead to poisoning of all progeny that do not inherit the dual poison/antidote allele, or express a compatible antidote. This Schizosaccharomyces kambucha (Fission yeast) protein is Meiotic drive suppressor wtf6.